We begin with the raw amino-acid sequence, 103 residues long: Large ribosomal subunit protein bL21 (103 aa).

It belongs to the bacterial ribosomal protein bL21 family. Part of the 50S ribosomal subunit. Contacts protein L20.

In terms of biological role, this protein binds to 23S rRNA in the presence of protein L20. The polypeptide is Large ribosomal subunit protein bL21 (Borrelia garinii subsp. bavariensis (strain ATCC BAA-2496 / DSM 23469 / PBi) (Borreliella bavariensis)).